Here is a 270-residue protein sequence, read N- to C-terminus: MAVITKIEVQKRSKERFNVYIDKGQGEEYGFSVNEVILIKHGLQKGLEIDEIALGNILYNEEVQKAYLQAISYLSYQMRTKLEIEDFLRKKEVGQAIISEVVSKLLHDRYINDKEYAILYTRTQSNVNRKGPTVIKRELLNKGVQDLIIMHSLQEYTKEKQIENALILIEKKKKSYQKHSFLQMKLKLDEMLVRKGYSRDVIQICLEELKDEKDDEKQQEALHYHGNKYYEKYKKYDGWTFENKMKQALYRKGFSIDEIEIFLQMKREEG.

This sequence belongs to the RecX family.

It localises to the cytoplasm. In terms of biological role, modulates RecA activity. This Bacillus thuringiensis subsp. konkukian (strain 97-27) protein is Regulatory protein RecX.